Here is a 61-residue protein sequence, read N- to C-terminus: Putative antitoxin VapB21 (61 aa).

Belongs to the UPF0165 family.

Possibly the antitoxin component of a type II toxin-antitoxin (TA) system. Its cognate toxin is VapC21 (Potential). The polypeptide is Putative antitoxin VapB21 (vapB21) (Archaeoglobus fulgidus (strain ATCC 49558 / DSM 4304 / JCM 9628 / NBRC 100126 / VC-16)).